The chain runs to 141 residues: Large ribosomal subunit protein uL11 (141 aa).

This sequence belongs to the universal ribosomal protein uL11 family. Part of the ribosomal stalk of the 50S ribosomal subunit. Interacts with L10 and the large rRNA to form the base of the stalk. L10 forms an elongated spine to which L12 dimers bind in a sequential fashion forming a multimeric L10(L12)X complex. One or more lysine residues are methylated.

Functionally, forms part of the ribosomal stalk which helps the ribosome interact with GTP-bound translation factors. This chain is Large ribosomal subunit protein uL11, found in Lactococcus lactis subsp. cremoris (strain MG1363).